Reading from the N-terminus, the 257-residue chain is NAD-capped RNA hydrolase NudC (257 aa).

A substrate-binding site is contributed by Arg69. Zn(2+)-binding residues include Cys98 and Cys101. A substrate-binding site is contributed by Glu111. 2 residues coordinate Zn(2+): Cys116 and Cys119. Tyr124 contributes to the substrate binding site. Positions 125-248 (PQIAPCIIVA…TVARRLIEDT (124 aa)) constitute a Nudix hydrolase domain. 3 residues coordinate a divalent metal cation: Ala158, Glu174, and Glu178. Residues 159 to 180 (GFVEVGETLEQAVAREVMEESG) carry the Nudix box motif. 192 to 199 (QPWPFPQS) contacts substrate. Glu219 lines the a divalent metal cation pocket. Residue Ala241 coordinates substrate.

This sequence belongs to the Nudix hydrolase family. NudC subfamily. Homodimer. The cofactor is Mg(2+). Mn(2+) is required as a cofactor. Requires Zn(2+) as cofactor.

It carries out the reaction a 5'-end NAD(+)-phospho-ribonucleoside in mRNA + H2O = a 5'-end phospho-adenosine-phospho-ribonucleoside in mRNA + beta-nicotinamide D-ribonucleotide + 2 H(+). It catalyses the reaction NAD(+) + H2O = beta-nicotinamide D-ribonucleotide + AMP + 2 H(+). The enzyme catalyses NADH + H2O = reduced beta-nicotinamide D-ribonucleotide + AMP + 2 H(+). MRNA decapping enzyme that specifically removes the nicotinamide adenine dinucleotide (NAD) cap from a subset of mRNAs by hydrolyzing the diphosphate linkage to produce nicotinamide mononucleotide (NMN) and 5' monophosphate mRNA. The NAD-cap is present at the 5'-end of some mRNAs and stabilizes RNA against 5'-processing. Has preference for mRNAs with a 5'-end purine. Catalyzes the hydrolysis of a broad range of dinucleotide pyrophosphates. The protein is NAD-capped RNA hydrolase NudC of Salmonella schwarzengrund (strain CVM19633).